The chain runs to 432 residues: MSIITDVYAREILDSRGNPTIEVEVYTESGAFGRGMVPSGASTGEYEAVELRDGDKARYGGKGVTKAVDNVNNIIAEAIIGYDVRDQMAIDKAMIALDGTPNKGKLGANAILGVSIAVARAAADYLEVPLYHYLGGFNTKVLPTPMMNIINGGSHADNSIDFQEFMIMPVGAPTFKEALRMGAEVFHALAAILKSRGLATSVGDEGGFAPNLGSNEEGFEVIIEAIEKAGYVPGKDVVLAMDAASSEFYDKEKGVYVLADSGEGEKTTDEMIKFYEELVSKYPIISIEDGLDENDWDGFKKLTDVLGDKVQLVGDDLFVTNTQKLSEGIEKGIANSILIKVNQIGTLTETFEAIEMAKEAGYTAVVSHRSGETEDSTISDIAVATNAGQIKTGSLSRTDRIAKYNQLLRIEDQLGEVAEYKGLKSFYNLKAA.

Residue glutamine 163 participates in (2R)-2-phosphoglycerate binding. The Proton donor role is filled by glutamate 205. Aspartate 242, glutamate 288, and aspartate 315 together coordinate Mg(2+). (2R)-2-phosphoglycerate-binding residues include lysine 340, arginine 369, serine 370, and lysine 391. Lysine 340 serves as the catalytic Proton acceptor.

The protein belongs to the enolase family. Homodimer. It depends on Mg(2+) as a cofactor.

The protein localises to the cytoplasm. The protein resides in the secreted. Its subcellular location is the cell surface. The enzyme catalyses (2R)-2-phosphoglycerate = phosphoenolpyruvate + H2O. Its pathway is carbohydrate degradation; glycolysis; pyruvate from D-glyceraldehyde 3-phosphate: step 4/5. The covalent binding to the substrate causes inactivation of the enzyme, and possibly serves as a signal for the export of the protein. In terms of biological role, catalyzes the reversible conversion of 2-phosphoglycerate (2-PG) into phosphoenolpyruvate (PEP). It is essential for the degradation of carbohydrates via glycolysis. The sequence is that of Enolase from Enterococcus hirae.